The chain runs to 997 residues: Pro-apoptotic serine protease NMA111 (997 aa).

The tract at residues 1-43 (MTISLSNIKKRDHSKISDGTSGESSLVKRKQLESATGDQEEEY) is disordered. The segment at 83–273 (VVSIHFSQVA…LPLDRILRAL (191 aa)) is serine protease. Catalysis depends on charge relay system residues histidine 121, aspartate 152, and serine 235. PDZ domains lie at 300-378 (RRLG…QRGG) and 779-854 (EEWI…VRDG).

Belongs to the peptidase S1C family. In terms of assembly, interacts with BIR1.

The protein localises to the nucleus. Functionally, nuclear serine protease which mediates apoptosis through proteolysis of the apoptotic inhibitor BIR1. The polypeptide is Pro-apoptotic serine protease NMA111 (NMA111) (Saccharomyces cerevisiae (strain YJM789) (Baker's yeast)).